The chain runs to 280 residues: Orotidine 5'-phosphate decarboxylase (280 aa).

K96 (proton donor) is an active-site residue.

This sequence belongs to the OMP decarboxylase family. Type 2 subfamily.

It carries out the reaction orotidine 5'-phosphate + H(+) = UMP + CO2. Its pathway is pyrimidine metabolism; UMP biosynthesis via de novo pathway; UMP from orotate: step 2/2. In Parabacteroides distasonis (strain ATCC 8503 / DSM 20701 / CIP 104284 / JCM 5825 / NCTC 11152), this protein is Orotidine 5'-phosphate decarboxylase.